Consider the following 214-residue polypeptide: MGILLVDDHPMIRLGLAHFLGEGLNGLPVREAGSGEEALQQVQEELPGLVIMDFDLPGISGLETTRRLRQRLPQLRVLFFSEHTELGLVRQALDAGACGFLSKAAAPAVVLEAVRRVLAGHAYIEQPLATQLACQPHPGQGGGNARLQGLTQREIEVFLMLAKGTPTRLIAQQLCISAKTVSNYLTLLKSKLQVSSHAELVHLAIEAGLLRIAA.

Positions 2-118 (GILLVDDHPM…VVLEAVRRVL (117 aa)) constitute a Response regulatory domain. D53 is subject to 4-aspartylphosphate. The HTH luxR-type domain maps to 143–208 (GNARLQGLTQ…ELVHLAIEAG (66 aa)). Residues 167-186 (TRLIAQQLCISAKTVSNYLT) constitute a DNA-binding region (H-T-H motif).

Positive regulator of the expression of the gene qedA and the activity of ADH I but does not affect the activities of ADH IIB or ADH IIG. The polypeptide is Transcriptional activator protein ExaE (Pseudomonas putida (Arthrobacter siderocapsulatus)).